Consider the following 761-residue polypeptide: BMP/retinoic acid-inducible neural-specific protein 1 (761 aa).

The first 19 residues, 1–19, serve as a signal peptide directing secretion; it reads MNWRFVELLYFLFIWGRIS. The MACPF domain maps to 68–251; it reads RYKIYREFAR…FVQSALSYIM (184 aa). 7 N-linked (GlcNAc...) asparagine glycosylation sites follow: Asn156, Asn433, Asn443, Asn553, Asn599, Asn631, and Asn677.

This sequence belongs to the BRINP family. In terms of tissue distribution, highly expressed in brain. Weakly expressed in heart, lung, skeletal muscle, kidney, thymus, prostate, testis and small intestine.

The protein resides in the cytoplasm. Its function is as follows. Plays a role in neurogenesis and brain development. May suppress cell cycle progression in postmitotic neurons by inhibiting G1/S transition. The polypeptide is BMP/retinoic acid-inducible neural-specific protein 1 (BRINP1) (Homo sapiens (Human)).